A 41-amino-acid chain; its full sequence is Large ribosomal subunit protein bL36 (41 aa).

The protein belongs to the bacterial ribosomal protein bL36 family.

In Maricaulis maris (strain MCS10) (Caulobacter maris), this protein is Large ribosomal subunit protein bL36.